We begin with the raw amino-acid sequence, 347 residues long: Large ribosomal subunit protein uL10 (347 aa).

A disordered region spans residues 312 to 347 (AAAPAEEEVKKEEEPEEEEEDHAEEDGMAGLGALFG). Positions 325-338 (EPEEEEEDHAEEDG) are enriched in acidic residues.

Belongs to the universal ribosomal protein uL10 family. Part of the 50S ribosomal subunit. Forms part of the ribosomal stalk which helps the ribosome interact with GTP-bound translation factors. Forms a heptameric L10(L12)2(L12)2(L12)2 complex, where L10 forms an elongated spine to which the L12 dimers bind in a sequential fashion.

Its function is as follows. Forms part of the ribosomal stalk, playing a central role in the interaction of the ribosome with GTP-bound translation factors. This is Large ribosomal subunit protein uL10 from Methanosarcina acetivorans (strain ATCC 35395 / DSM 2834 / JCM 12185 / C2A).